The following is a 555-amino-acid chain: Protein FAM234A (555 aa).

A compositionally biased stretch (basic and acidic residues) spans 1–22 (MMDNKDLEAEIHPLKNEDKKSQ). The segment at 1–40 (MMDNKDLEAEIHPLKNEDKKSQENPGNLPRNEDNLKSKPV) is disordered. Over 1–49 (MMDNKDLEAEIHPLKNEDKKSQENPGNLPRNEDNLKSKPVPSRLSRCRT) the chain is Cytoplasmic. Phosphoserine is present on Ser-21. Residues 50–70 (VAFFLSLFTCLFVVFVLSFII) traverse the membrane as a helical; Signal-anchor for type II membrane protein segment. At 71–555 (PCPDRPSSQG…FSRLRYRSEM (485 aa)) the chain is on the extracellular side. N-linked (GlcNAc...) asparagine glycosylation is found at Asn-116, Asn-120, Asn-317, Asn-392, and Asn-476.

This sequence belongs to the FAM234 family.

It is found in the membrane. The chain is Protein FAM234A from Mus musculus (Mouse).